A 346-amino-acid chain; its full sequence is WD repeat-containing protein LWD1 (346 aa).

Methionine 1 bears the N-acetylmethionine mark. WD repeat units follow at residues 79 to 121 (EHPY…SRVE), 133 to 173 (EFCG…VDTQ), 176 to 214 (AHDKEVFDIAWGGVGVFASVSADGSVRVFDLRDKEHSTI), and 265 to 305 (RHQA…QHVE).

Its subcellular location is the nucleus. Functionally, clock protein essential for the proper expression phase and period length of both the oscillator and output genes known to participate in photoperiod sensing. Required for the expression of APRR9, APRR7, and APRR5. Regulated by APRR9 and APRR7 at the transcriptional level, indicating the existence of a positive feedback loop within the circadian clock. May function to delay the expression of the morning genes until dawn approaches. In Arabidopsis thaliana (Mouse-ear cress), this protein is WD repeat-containing protein LWD1 (LWD1).